The primary structure comprises 164 residues: V-type proton ATPase subunit c' (164 aa).

Topologically, residues 1-16 (MDMVASDNVYAPLYAP) are lumenal. A helical membrane pass occupies residues 17–37 (FFGFAGCALAMILSCLGAAIG). The Cytoplasmic segment spans residues 38–59 (TAKSGIGIAGIGTFKPELIMKS). A helical membrane pass occupies residues 60 to 80 (LIPVVMSGILAIYGLVVAVLI). Topologically, residues 81–98 (AGNLSPTEEYTLFNGFMH) are lumenal. A helical transmembrane segment spans residues 99-119 (LSCGLCVGFACLSSGYAIGIV). Topologically, residues 120-136 (GDVGVRKYMHQPRLFVG) are cytoplasmic. A helical membrane pass occupies residues 137–157 (IVLILIFSEVLGLYGMIIALI). Topologically, residues 158-164 (LNTKGSE) are lumenal.

This sequence belongs to the V-ATPase proteolipid subunit family. As to quaternary structure, V-ATPase is a heteromultimeric enzyme composed of a peripheral catalytic V1 complex (components A to H) attached to an integral membrane V0 proton pore complex (components: a, c, c', c'', d, e, f and VOA1). The decameric c-ring forms the proton-conducting pore, and is composed of eight proteolipid subunits c, one subunit c' and one subunit c''.

It is found in the vacuole membrane. Functionally, proton-conducting pore forming subunit of the V0 complex of vacuolar(H+)-ATPase (V-ATPase), a multisubunit enzyme composed of a peripheral complex (V1) that hydrolyzes ATP and a membrane integral complex (V0) that translocates protons. V-ATPase is responsible for acidifying and maintaining the pH of intracellular compartments. The chain is V-type proton ATPase subunit c' (VMA11) from Candida glabrata (strain ATCC 2001 / BCRC 20586 / JCM 3761 / NBRC 0622 / NRRL Y-65 / CBS 138) (Yeast).